Consider the following 352-residue polypeptide: MDYQVSSPTYDIDYYTSEPCQKINVKQIAARLLPPLYSLVFIFGFVGNILVVLILINCKRLKSMTDIYLLNLAISDLLFLLTVPFWAHYAAAQWDFGNTMCQLLTGLYFIGFFSGIFFIILLTIDRYLAIVHAVFALKARTVTFGVVTSVITWVVAVFASLPGIIFTRSQREGLHYTCSPHFPYSQYQFWKNFQTLKIVILGLVLPLLVMVICYSGILKTLLRCRNEKKRHRAVRLIFTIMIVYFLFWAPYNIVLLLNTFQEFFGLNNCSSSNRLDQAMQVTETLGMTHCCINPIIYAFVGEKFRNYLLVFFQKHIAKRFCKCCSIFQQEASERASSVYTRSTGEQEISVGL.

The Extracellular portion of the chain corresponds to 1–30 (MDYQVSSPTYDIDYYTSEPCQKINVKQIAA). Tyrosine 3 is modified (sulfotyrosine). 2 O-linked (GalNAc...) serine glycosylation sites follow: serine 6 and serine 7. Sulfotyrosine occurs at positions 10, 14, and 15. 2 disulfides stabilise this stretch: cysteine 20-cysteine 269 and cysteine 101-cysteine 178. The chain crosses the membrane as a helical span at residues 31–58 (RLLPPLYSLVFIFGFVGNILVVLILINC). The Cytoplasmic portion of the chain corresponds to 59-68 (KRLKSMTDIY). The chain crosses the membrane as a helical span at residues 69–89 (LLNLAISDLLFLLTVPFWAHY). Topologically, residues 90–102 (AAAQWDFGNTMCQ) are extracellular. The chain crosses the membrane as a helical span at residues 103-124 (LLTGLYFIGFFSGIFFIILLTI). The Cytoplasmic portion of the chain corresponds to 125–141 (DRYLAIVHAVFALKART). The chain crosses the membrane as a helical span at residues 142 to 166 (VTFGVVTSVITWVVAVFASLPGIIF). At 167–198 (TRSQREGLHYTCSPHFPYSQYQFWKNFQTLKI) the chain is on the extracellular side. Residues 199–218 (VILGLVLPLLVMVICYSGIL) form a helical membrane-spanning segment. The Cytoplasmic portion of the chain corresponds to 219–235 (KTLLRCRNEKKRHRAVR). Residues 236-260 (LIFTIMIVYFLFWAPYNIVLLLNTF) traverse the membrane as a helical segment. Over 261-277 (QEFFGLNNCSSSNRLDQ) the chain is Extracellular. Residues 278–301 (AMQVTETLGMTHCCINPIIYAFVG) traverse the membrane as a helical segment. Residues 302–352 (EKFRNYLLVFFQKHIAKRFCKCCSIFQQEASERASSVYTRSTGEQEISVGL) lie on the Cytoplasmic side of the membrane. S-palmitoyl cysteine attachment occurs at residues cysteine 321, cysteine 323, and cysteine 324. 4 positions are modified to phosphoserine; by BARK1: serine 336, serine 337, serine 342, and serine 349.

It belongs to the G-protein coupled receptor 1 family. As to quaternary structure, interacts with PRAF2. Efficient ligand binding to CCL3/MIP-1alpha and CCL4/MIP-1beta requires sulfation, O-glycosylation and sialic acid modifications. Glycosylation on Ser-6 is required for efficient binding of CCL4. Interacts with GRK2. Interacts with ARRB1 and ARRB2. Interacts with CNIH4. Interacts with S100A4; this interaction stimulates T-lymphocyte chemotaxis. Post-translationally, sulfated on at least 2 of the N-terminal tyrosines. Sulfation is required for efficient binding of the chemokines, CCL3 and CCL4. In terms of processing, palmitoylation in the C-terminal is important for cell surface expression. Phosphorylation on serine residues in the C-terminal is stimulated by binding CC chemokines especially by APO-RANTES. Post-translationally, O-glycosylated, but not N-glycosylated. Ser-6 appears to be the major site even if Ser-7 may be also O-glycosylated. Also sialylated glycans present which contribute to chemokine binding. Thr-16 and Ser-17 may also be glycosylated and, if so, with small moieties such as a T-antigen.

The protein resides in the cell membrane. In terms of biological role, receptor for a number of inflammatory CC-chemokines including CCL3/MIP-1-alpha, CCL4/MIP-1-beta and RANTES and subsequently transduces a signal by increasing the intracellular calcium ion level. May play a role in the control of granulocytic lineage proliferation or differentiation. Participates in T-lymphocyte migration to the infection site by acting as a chemotactic receptor. The protein is C-C chemokine receptor type 5 (CCR5) of Cercocebus atys (Sooty mangabey).